We begin with the raw amino-acid sequence, 514 residues long: Extracellular exo-inulinase (514 aa).

An N-terminal signal peptide occupies residues 1–18; it reads MRAFLALIFLTFVMNVES. Substrate-binding positions include 33 to 34 and glutamine 52; that span reads ND. The active-site Nucleophile is the aspartate 34. The N-linked (GlcNAc...) asparagine glycan is linked to asparagine 56. Positions 60 and 95 each coordinate substrate. N-linked (GlcNAc...) asparagine glycosylation is found at asparagine 104 and asparagine 110. A substrate-binding site is contributed by 162-163; that stretch reads RD. N-linked (GlcNAc...) asparagine glycosylation is found at asparagine 197 and asparagine 203. 2 residues coordinate substrate: glutamate 214 and tryptophan 300. The active-site Proton donor/acceptor is the glutamate 214. N-linked (GlcNAc...) asparagine glycosylation is found at asparagine 357, asparagine 371, asparagine 389, and asparagine 422.

Belongs to the glycosyl hydrolase 32 family.

The protein localises to the secreted. It catalyses the reaction Hydrolysis of terminal, non-reducing (2-&gt;1)- and (2-&gt;6)-linked beta-D-fructofuranose residues in fructans.. Its function is as follows. Exo-inulinase involved in utilization of the plant storage polymer inulin, consisting of fructooligosaccharides with a degree of polymerization (DP) value from 2 to 60. Splits off terminal fructose units successively from the non-reducing end of the inulin molecule. This is Extracellular exo-inulinase from Meyerozyma guilliermondii (strain ATCC 6260 / CBS 566 / DSM 6381 / JCM 1539 / NBRC 10279 / NRRL Y-324) (Yeast).